Here is a 675-residue protein sequence, read N- to C-terminus: Alpha-1,4-glucan:maltose-1-phosphate maltosyltransferase 1 (675 aa).

Alpha-maltose 1-phosphate-binding residues include Lys-264, Gln-324, and Asp-359. Asp-394 functions as the Nucleophile in the catalytic mechanism. Asn-395 is an alpha-maltose 1-phosphate binding site. Catalysis depends on Glu-423, which acts as the Proton donor. Residue 534 to 535 (KY) coordinates alpha-maltose 1-phosphate.

Belongs to the glycosyl hydrolase 13 family. GlgE subfamily. As to quaternary structure, homodimer.

The enzyme catalyses alpha-maltose 1-phosphate + [(1-&gt;4)-alpha-D-glucosyl](n) = [(1-&gt;4)-alpha-D-glucosyl](n+2) + phosphate. With respect to regulation, is competitively inhibited by alpha-, beta- and gamma-cyclodextrins (cyclic maltooligosaccharides), unlike GlgE from M.tuberculosis. Its function is as follows. Maltosyltransferase that uses maltose 1-phosphate (M1P) as the sugar donor to elongate linear or branched alpha-(1-&gt;4)-glucans. Maltooligosaccharides with a degree of polymerization (DP) superior or equal to 4 are efficient acceptors, with DP6 being optimal in the GlgE-catalyzed polymerization with M1P. Is specific for the alpha-anomer of M1P as substrate, since the beta-anomer of M1P gives no activity. Alpha-D-glucose 1-phosphate cannot serve as a donor substrate, but alpha-maltosyl fluoride is an efficient donor in vitro. Exhibits an alpha-retaining catalytic mechanism, with evidence that maltooligosaccharide acceptors are extended at their non-reducing ends. Is also able to catalyze the reverse reaction in vitro, releasing M1P from glycogen or maltoheptaose in the presence of inorganic phosphate. Also catalyzes disproportionation reactions through maltosyl transfer between maltooligosaccharides. Is probably involved in a branched alpha-glucan biosynthetic pathway from trehalose, together with TreS, Mak and GlgB. This Streptomyces coelicolor (strain ATCC BAA-471 / A3(2) / M145) protein is Alpha-1,4-glucan:maltose-1-phosphate maltosyltransferase 1 (glgE1).